The following is a 475-amino-acid chain: Ubiquilin-like protein (475 aa).

In terms of domain architecture, Ubiquitin-like spans 31–105; it reads TRVIVKTAGN…IYLVIKSKQG (75 aa). 2 disordered regions span residues 113–138 and 305–325; these read FRDLPTNDPCHRDRNTKGNSSRVHQP and QVQSSPPPPPPSQEQQDQLTQ. Polar residues predominate over residues 129 to 138; the sequence is KGNSSRVHQP.

The sequence is that of Ubiquilin-like protein (UBQLNL) from Homo sapiens (Human).